Here is a 354-residue protein sequence, read N- to C-terminus: Methylthioribose-1-phosphate isomerase (354 aa).

Residues 58–60 (RGA), arginine 101, and glutamine 204 each bind substrate. Aspartate 245 functions as the Proton donor in the catalytic mechanism. 255 to 256 (NK) contacts substrate.

It belongs to the eIF-2B alpha/beta/delta subunits family. MtnA subfamily.

It catalyses the reaction 5-(methylsulfanyl)-alpha-D-ribose 1-phosphate = 5-(methylsulfanyl)-D-ribulose 1-phosphate. It participates in amino-acid biosynthesis; L-methionine biosynthesis via salvage pathway; L-methionine from S-methyl-5-thio-alpha-D-ribose 1-phosphate: step 1/6. In terms of biological role, catalyzes the interconversion of methylthioribose-1-phosphate (MTR-1-P) into methylthioribulose-1-phosphate (MTRu-1-P). This is Methylthioribose-1-phosphate isomerase from Xanthomonas euvesicatoria pv. vesicatoria (strain 85-10) (Xanthomonas campestris pv. vesicatoria).